The following is a 489-amino-acid chain: Lysine-specific permease LysP (489 aa).

Residues 2-22 (VSETKTTEAPGLRRELKARHL) are Cytoplasmic-facing. Residues 23–43 (TMIAIGGSIGTGLFVASGATI) form a helical membrane-spanning segment. The Periplasmic segment spans residues 44 to 45 (SQ). The helical transmembrane segment at 46 to 66 (AGPGGALLSYMLIGLMVYFLM) threads the bilayer. At 67–105 (TSLGELAAYMPVSGSFATYGQNYVEEGFGFALGWNYWYN) the chain is on the cytoplasmic side. A helical transmembrane segment spans residues 106 to 126 (WAVTIAVDLVAAQLVMSWWFP). Residues 127-128 (DT) are Periplasmic-facing. Residues 129–149 (PGWIWSALFLGVIFLLNYISV) traverse the membrane as a helical segment. The Cytoplasmic segment spans residues 150-161 (RGFGEAEYWFSL). A helical transmembrane segment spans residues 162–182 (IKVTTVIVFIIVGVLMIIGIF). Topologically, residues 183-197 (KGAQPAGWSNWTIGE) are periplasmic. The helical transmembrane segment at 198–218 (APFAGGFAAMIGVAMIVGFSF) threads the bilayer. Topologically, residues 219-244 (QGTELIGIAAGESEDPAKNIPRAVRQ) are cytoplasmic. The chain crosses the membrane as a helical span at residues 245–265 (VFWRILLFYVFAILIISLIIP). The Periplasmic portion of the chain corresponds to 266 to 290 (YTDPSLLRNDVKDISVSPFTLVFQH). Residues 291–311 (AGLLSAAAVMNAVILTAVLSA) form a helical membrane-spanning segment. Residues 312–346 (GNSGMYASTRMLYTLACDGKAPRIFAKLSRGGVPR) are Cytoplasmic-facing. Residues 347 to 367 (NALYATTVIAGLCFLTSMFGN) traverse the membrane as a helical segment. Residues 368–370 (QTV) are Periplasmic-facing. Residues 371–391 (YLWLLNTSGMTGFIAWLGIAI) form a helical membrane-spanning segment. Residues 392–413 (SHYRFRRGYVLQGHDINDLPYR) lie on the Cytoplasmic side of the membrane. Residues 414–434 (SGFFPLGPIFAFILCLIITLG) traverse the membrane as a helical segment. Residues 435-446 (QNYEAFLKDTID) lie on the Periplasmic side of the membrane. A helical membrane pass occupies residues 447–467 (WGGVAATYIGIPLFLIIWFGY). Over 468–489 (KLIKGTHFVRYSEMKFPQNDKK) the chain is Cytoplasmic.

The protein belongs to the amino acid-polyamine-organocation (APC) superfamily. Amino acid transporter (AAT) (TC 2.A.3.1) family. In terms of assembly, interacts strongly with the transcriptional activator CadC in the absence of lysine or at low lysine concentrations. Interaction is markedly attenuated under increasing lysine levels. Concomitant pH-dependent protonation of periplasmic amino acids in both proteins dissolves their electrostatic connections resulting in further destabilization of the CadC/LysP interaction. Low pH promotes oligomerization of LysP.

The protein localises to the cell inner membrane. It carries out the reaction L-lysine(out) + H(+)(out) = L-lysine(in) + H(+)(in). Permease involved in lysine uptake. In addition, functions as a lysine sensor that mediates the lysine-dependent regulation of the transcriptional activator CadC. In the absence of lysine, or at low lysine concentrations, LysP inhibits CadC by an interaction with the transmembrane domain of CadC. In the presence of lysine, LysP loses its ability to interact with and inhibit CadC, and acts as a lysine permease. The sequence is that of Lysine-specific permease LysP from Escherichia coli (strain K12).